We begin with the raw amino-acid sequence, 291 residues long: MQSLSLRAHAKVNMHLWVGARRADGLHSIESVMQRITLADSLSLSRLDIPGRCEVCSPYMALPRENTLTRAYARFCQVTGVHDGVRVRVVKRIPAGSGLGGGSADAAALLCGLDTLFGTTLSARVLREVAYSVGSDVPFFLASQAACVLGGGEQLVPLVPKTGYLGLLVWPGLHSGSAQAYEDLDRLRACGVHAADGEQYSLRGATALSAHYAQDCARWRFFNSLDAPVQRRYPVVALARWDLARAGACFTAMSGSGSXVFGLYRDEEELRRAHKLLAKRWCWCVRVRLCG.

Lys-11 is an active-site residue. Residue 94 to 104 (PAGSGLGGGSA) coordinates ATP. The active site involves Asp-136.

This sequence belongs to the GHMP kinase family. IspE subfamily.

It catalyses the reaction 4-CDP-2-C-methyl-D-erythritol + ATP = 4-CDP-2-C-methyl-D-erythritol 2-phosphate + ADP + H(+). Its pathway is isoprenoid biosynthesis; isopentenyl diphosphate biosynthesis via DXP pathway; isopentenyl diphosphate from 1-deoxy-D-xylulose 5-phosphate: step 3/6. Catalyzes the phosphorylation of the position 2 hydroxy group of 4-diphosphocytidyl-2C-methyl-D-erythritol. The sequence is that of 4-diphosphocytidyl-2-C-methyl-D-erythritol kinase from Treponema pallidum (strain Nichols).